Consider the following 458-residue polypeptide: ATP synthase subunit beta (458 aa).

148–155 (GGAGVGKT) lines the ATP pocket.

Belongs to the ATPase alpha/beta chains family. As to quaternary structure, F-type ATPases have 2 components, CF(1) - the catalytic core - and CF(0) - the membrane proton channel. CF(1) has five subunits: alpha(3), beta(3), gamma(1), delta(1), epsilon(1). CF(0) has three main subunits: a(1), b(2) and c(9-12). The alpha and beta chains form an alternating ring which encloses part of the gamma chain. CF(1) is attached to CF(0) by a central stalk formed by the gamma and epsilon chains, while a peripheral stalk is formed by the delta and b chains.

It is found in the cell inner membrane. It catalyses the reaction ATP + H2O + 4 H(+)(in) = ADP + phosphate + 5 H(+)(out). In terms of biological role, produces ATP from ADP in the presence of a proton gradient across the membrane. The catalytic sites are hosted primarily by the beta subunits. This Ectopseudomonas mendocina (strain ymp) (Pseudomonas mendocina) protein is ATP synthase subunit beta.